The chain runs to 403 residues: Na(+)/H(+) antiporter NhaA (403 aa).

11 helical membrane passes run 23–43, 66–86, 101–121, 132–152, 161–181, 184–204, 219–239, 257–277, 297–317, 333–353, and 363–383; these read AFFL…PWAA, VAAW…ILEI, VALP…TYLL, GWAI…LALG, AWLM…IALF, GSMY…LIGA, GILL…AGVI, WVSS…FGFM, LGIM…ATLL, GMLF…LFVA, and IAPA…TGWF.

It belongs to the NhaA Na(+)/H(+) (TC 2.A.33) antiporter family.

It is found in the cell inner membrane. The catalysed reaction is Na(+)(in) + 2 H(+)(out) = Na(+)(out) + 2 H(+)(in). Its function is as follows. Na(+)/H(+) antiporter that extrudes sodium in exchange for external protons. This chain is Na(+)/H(+) antiporter NhaA, found in Gluconobacter oxydans (strain 621H) (Gluconobacter suboxydans).